We begin with the raw amino-acid sequence, 361 residues long: tRNA(Ile)-lysidine synthase (361 aa).

Residue 32-37 (SGGPDS) participates in ATP binding.

Belongs to the tRNA(Ile)-lysidine synthase family.

It localises to the cytoplasm. The enzyme catalyses cytidine(34) in tRNA(Ile2) + L-lysine + ATP = lysidine(34) in tRNA(Ile2) + AMP + diphosphate + H(+). Ligates lysine onto the cytidine present at position 34 of the AUA codon-specific tRNA(Ile) that contains the anticodon CAU, in an ATP-dependent manner. Cytidine is converted to lysidine, thus changing the amino acid specificity of the tRNA from methionine to isoleucine. The protein is tRNA(Ile)-lysidine synthase of Bradyrhizobium diazoefficiens (strain JCM 10833 / BCRC 13528 / IAM 13628 / NBRC 14792 / USDA 110).